The chain runs to 902 residues: Glutamate receptor 4 (902 aa).

The first 20 residues, 1–20, serve as a signal peptide directing secretion; that stretch reads MRIISRQIVLLFSGFWGLAM. Residues 22–544 are Extracellular-facing; sequence AFPSSVQIGG…GVFSFLDPLA (523 aa). 6 N-linked (GlcNAc...) asparagine glycosylation sites follow: Asn-52, Asn-56, Asn-258, Asn-371, Asn-407, and Asn-414. Cys-84 and Cys-331 are joined by a disulfide. Positions 500, 502, and 507 each coordinate L-glutamate. The chain crosses the membrane as a helical span at residues 545 to 565; sequence YEIWMCIVFAYIGVSVVLFLV. Residues 566–592 lie on the Cytoplasmic side of the membrane; that stretch reads SRFSPYEWHTEEPEDGKEGPSDQPPNE. Positions 593-608 form an intramembrane region, helical; Pore-forming; it reads FGIFNSLWFSLGAFMQ. Residues 609–611 lie within the membrane without spanning it; sequence QGC. A lipid anchor (S-palmitoyl cysteine) is attached at Cys-611. At 612-617 the chain is on the cytoplasmic side; the sequence is DISPRS. A helical transmembrane segment spans residues 618-638; the sequence is LSGRIVGGVWWFFTLIIISSY. At 639 to 813 the chain is on the extracellular side; sequence TANLAAFLTV…DKTSALSLSN (175 aa). Residues Ser-676, Thr-677, and Glu-727 each contribute to the L-glutamate site. Residues Cys-740 and Cys-795 are joined by a disulfide bond. A helical transmembrane segment spans residues 814-834; sequence VAGVFYILVGGLGLAMLVALI. Residues 835–902 are Cytoplasmic-facing; that stretch reads EFCYKSRAEA…GLAVIASDLP (68 aa). Cys-837 carries S-palmitoyl cysteine lipidation. Ser-862 is subject to Phosphoserine; by PKC/PRKCG.

The protein belongs to the glutamate-gated ion channel (TC 1.A.10.1) family. GRIA4 subfamily. Homotetramer or heterotetramer of pore-forming glutamate receptor subunits. Tetramers may be formed by the dimerization of dimers. Interacts with EPB41L1 via its C-terminus. Isoform 3 interacts with PICK1. Found in a complex with GRIA1, GRIA2, GRIA3, CNIH2, CNIH3, CACNG2, CACNG3, CACNG4, CACNG5, CACNG7 and CACNG8. Interacts with CACNG5 and PRKCG. Found in a complex with GRIA1, GRIA2, GRIA3, DLG4, CACNG8 and CNIH2. Palmitoylated. Depalmitoylated upon L-glutamate stimulation. ZDHHC3/GODZ specifically palmitoylates Cys-611, which leads to Golgi retention and decreased cell surface expression. In contrast, Cys-837 palmitoylation does not affect cell surface expression but regulates stimulation-dependent endocytosis. In terms of processing, phosphorylated at Ser-862 by PRKCG; phosphorylation increases plasma membrane-associated GRI4 expression.

Its subcellular location is the cell membrane. The protein resides in the postsynaptic cell membrane. The protein localises to the cell projection. It localises to the dendrite. The catalysed reaction is Ca(2+)(in) = Ca(2+)(out). It catalyses the reaction Na(+)(in) = Na(+)(out). It carries out the reaction Mg(2+)(in) = Mg(2+)(out). Ionotropic glutamate receptor that functions as a ligand-gated cation channel, gated by L-glutamate and glutamatergic agonists such as alpha-amino-3-hydroxy-5-methyl-4-isoxazolepropionic acid (AMPA), quisqualic acid, and kainic acid. L-glutamate acts as an excitatory neurotransmitter at many synapses in the central nervous system and plays an important role in fast excitatory synaptic transmission. Binding of the excitatory neurotransmitter L-glutamate induces a conformation change, leading to the opening of the cation channel, and thereby converts the chemical signal to an electrical impulse upon entry of monovalent and divalent cations such as sodium and calcium. The receptor then desensitizes rapidly and enters a transient inactive state, characterized by the presence of bound agonist. In the presence of CACNG8, shows resensitization which is characterized by a delayed accumulation of current flux upon continued application of L-glutamate. The protein is Glutamate receptor 4 of Macaca fascicularis (Crab-eating macaque).